Reading from the N-terminus, the 193-residue chain is Peptidyl-tRNA hydrolase (193 aa).

Tyr-14 lines the tRNA pocket. His-19 acts as the Proton acceptor in catalysis. TRNA contacts are provided by Phe-64, Asn-66, and Asn-112.

The protein belongs to the PTH family. As to quaternary structure, monomer.

The protein localises to the cytoplasm. It carries out the reaction an N-acyl-L-alpha-aminoacyl-tRNA + H2O = an N-acyl-L-amino acid + a tRNA + H(+). In terms of biological role, hydrolyzes ribosome-free peptidyl-tRNAs (with 1 or more amino acids incorporated), which drop off the ribosome during protein synthesis, or as a result of ribosome stalling. Catalyzes the release of premature peptidyl moieties from peptidyl-tRNA molecules trapped in stalled 50S ribosomal subunits, and thus maintains levels of free tRNAs and 50S ribosomes. In Bartonella henselae (strain ATCC 49882 / DSM 28221 / CCUG 30454 / Houston 1) (Rochalimaea henselae), this protein is Peptidyl-tRNA hydrolase.